A 164-amino-acid chain; its full sequence is FMN reductase (NADH) RutF (164 aa).

Belongs to the non-flavoprotein flavin reductase family. RutF subfamily.

It carries out the reaction FMNH2 + NAD(+) = FMN + NADH + 2 H(+). Its function is as follows. Catalyzes the reduction of FMN to FMNH2 which is used to reduce pyrimidine by RutA via the Rut pathway. This chain is FMN reductase (NADH) RutF, found in Klebsiella pneumoniae subsp. pneumoniae (strain ATCC 700721 / MGH 78578).